Here is a 188-residue protein sequence, read N- to C-terminus: MAEQQGREPECPVCWNPFNNTFHTPKVLDCCHSFCVECLAHISLVTPTRRRLLCPLCRHPTVLASGQPVTDLPTDTAVLTLLRLEPHHVILEGHQLCLKDQPKSRYFLRQPRVYTLDLGPEPASQAGQPQDVGPSTRPVPIRSRYSLRECFRNPHFRIFAYMMAVILCGTVLFIFSIFCTRRFFWGVG.

Residues 1–157 (MAEQQGREPE…RECFRNPHFR (157 aa)) are Cytoplasmic-facing. An RING-type zinc finger spans residues 11-58 (CPVCWNPFNNTFHTPKVLDCCHSFCVECLAHISLVTPTRRRLLCPLCR). The helical; Anchor for type IV membrane protein transmembrane segment at 158–178 (IFAYMMAVILCGTVLFIFSIF) threads the bilayer. At 179–188 (CTRRFFWGVG) the chain is on the lumenal side.

As to quaternary structure, interacts with FATE1. Interacts with SEC16A. Interacts with BCL2L1. Autoubiquitinated (in vitro).

It localises to the endoplasmic reticulum membrane. The protein localises to the endoplasmic reticulum. Its subcellular location is the golgi apparatus. It is found in the cis-Golgi network membrane. The protein resides in the lysosome. The catalysed reaction is S-ubiquitinyl-[E2 ubiquitin-conjugating enzyme]-L-cysteine + [acceptor protein]-L-lysine = [E2 ubiquitin-conjugating enzyme]-L-cysteine + N(6)-ubiquitinyl-[acceptor protein]-L-lysine.. The protein operates within protein modification; protein ubiquitination. Its function is as follows. Acts as an E3 ubiquitin ligase catalyzing the covalent attachment of ubiquitin moieties onto substrate proteins. Triggers apoptosis in response to prolonged ER stress by mediating the polyubiquitination and subsequent proteasomal degradation of BCL2L1. May collaborate with FATE1 to restrain BIK protein levels thus regulating apoptotic signaling. In Bos taurus (Bovine), this protein is E3 ubiquitin-protein ligase RNF183 (RNF183).